Here is a 107-residue protein sequence, read N- to C-terminus: Large ribosomal subunit protein eL33A (107 aa).

Residue A2 is modified to N-acetylalanine; partial. K47 participates in a covalent cross-link: Glycyl lysine isopeptide (Lys-Gly) (interchain with G-Cter in ubiquitin).

This sequence belongs to the eukaryotic ribosomal protein eL33 family. As to quaternary structure, component of the large ribosomal subunit (LSU). Mature yeast ribosomes consist of a small (40S) and a large (60S) subunit. The 40S small subunit contains 1 molecule of ribosomal RNA (18S rRNA) and 33 different proteins (encoded by 57 genes). The large 60S subunit contains 3 rRNA molecules (25S, 5.8S and 5S rRNA) and 46 different proteins (encoded by 81 genes). N-terminally acetylated by acetyltransferase NatA.

The protein localises to the cytoplasm. Functionally, component of the ribosome, a large ribonucleoprotein complex responsible for the synthesis of proteins in the cell. The small ribosomal subunit (SSU) binds messenger RNAs (mRNAs) and translates the encoded message by selecting cognate aminoacyl-transfer RNA (tRNA) molecules. The large subunit (LSU) contains the ribosomal catalytic site termed the peptidyl transferase center (PTC), which catalyzes the formation of peptide bonds, thereby polymerizing the amino acids delivered by tRNAs into a polypeptide chain. The nascent polypeptides leave the ribosome through a tunnel in the LSU and interact with protein factors that function in enzymatic processing, targeting, and the membrane insertion of nascent chains at the exit of the ribosomal tunnel. In Saccharomyces cerevisiae (strain ATCC 204508 / S288c) (Baker's yeast), this protein is Large ribosomal subunit protein eL33A.